The following is a 343-amino-acid chain: Putative trace amine-associated receptor 3 (343 aa).

The Extracellular portion of the chain corresponds to 1–35 (MDLTYIPEDLSSCPKFVNKILSSHQPLFSCPGDNV). A helical membrane pass occupies residues 36 to 56 (FGYDWSHDYPLFGNLVIMVSI). Residues 57–68 (SHFKQLHSPTNF) are Cytoplasmic-facing. The helical transmembrane segment at 69–89 (LILSMATTDFLLGFVIMPYSI) threads the bilayer. The Extracellular portion of the chain corresponds to 90–150 (MRSVESCWYF…TKMTNSTIKQ (61 aa)). Cysteines 104 and 189 form a disulfide. A glycan (N-linked (GlcNAc...) asparagine) is linked at asparagine 145. The helical transmembrane segment at 151–168 (LLAFCWSVPALFSFGLVL) threads the bilayer. Residues 169-172 (SEAD) are Cytoplasmic-facing. The extracellular Loop 2 (ECL2) stretch occupies residues 173–186 (VSGMQSYKILVACF). The helical transmembrane segment at 173 to 193 (VSGMQSYKILVACFNFCALTF) threads the bilayer. The Extracellular segment spans residues 194 to 198 (NKFWG). The chain crosses the membrane as a helical span at residues 199–223 (TILFTTCFFTPGSIMVGIYGKIFIV). At 224–257 (SKQHARVISHVPENTKGAVKKHLSKKKDRKAAKT) the chain is on the cytoplasmic side. A helical membrane pass occupies residues 258 to 278 (LGIVMGVFLACWLPCFLAVLI). The Extracellular portion of the chain corresponds to 279–287 (DPYLDYSTP). A helical membrane pass occupies residues 288-308 (ILILDLLVWLRYFNSTCNPLI). The Cytoplasmic portion of the chain corresponds to 309-343 (HGFFNPWFQKAFKYIVSGKIFSSHSETANLFPEAH).

It belongs to the G-protein coupled receptor 1 family. In terms of tissue distribution, not expressed in the pons, thalamus, globus pallidus, caudate, putamen or cerebellum.

It localises to the cell membrane. Putative olfactory receptor activated by several primary trace amines. The polypeptide is Putative trace amine-associated receptor 3 (Homo sapiens (Human)).